Reading from the N-terminus, the 327-residue chain is Aquaporin-1 (327 aa).

A disordered region spans residues 1-34; it reads MSSNDSNDTDKQHTRLDPTGVDDAYIPPEQPETK. At 1–48 the chain is on the cytoplasmic side; that stretch reads MSSNDSNDTDKQHTRLDPTGVDDAYIPPEQPETKHHRFKISKDTLRNH. A helical transmembrane segment spans residues 49–69; it reads FIAAAGEFCGTFMFLWCAYVI. At 70 to 91 the chain is on the extracellular side; it reads CNVANHDVALVAAPDGSHPGQL. A helical transmembrane segment spans residues 92-112; that stretch reads IMIAIGFGFSVMFSIWCFAGV. Residues 113-136 are Cytoplasmic-facing; the sequence is SGGALNPAVSLSLCLARAVSPTRC. The short motif at 118-120 is the NPA 1 element; it reads NPA. The helical transmembrane segment at 137–157 threads the bilayer; it reads VVMWVSQIVAGMAAGGAASAM. Residues 158–176 are Extracellular-facing; the sequence is TPGEVLFANSLGLGCSRTR. The chain crosses the membrane as a helical span at residues 177–197; it reads GLFLEMFGTAILCLTVLMTAV. The Cytoplasmic segment spans residues 198 to 203; sequence EKRETN. Residues 204-224 form a helical membrane-spanning segment; that stretch reads FMAALPIGISLFIAHVALTAY. The Extracellular segment spans residues 225–248; that stretch reads TGTGVNPARSLGAAVAARYFPHYH. The NPA 2 signature appears at 230 to 232; it reads NPA. The helical transmembrane segment at 249 to 269 threads the bilayer; that stretch reads WIYWIGPLLGSILAWSVWQLL. The Cytoplasmic portion of the chain corresponds to 270-327; that stretch reads QILDYTTYVTAEKAASTKEKAQKKVKPAVPLLWLKSNFSLLFFISRSLALNVIIFGKN.

It belongs to the MIP/aquaporin (TC 1.A.8) family.

Its subcellular location is the endoplasmic reticulum membrane. It is found in the cell membrane. Functionally, water channel required to facilitate the transport of water across membranes. Involved in sporulation, freeze tolerance and osmotolerance. Is non-functional in most laboratory strains. The chain is Aquaporin-1 (AQY1) from Saccharomyces cerevisiae (strain Lalvin EC1118 / Prise de mousse) (Baker's yeast).